A 293-amino-acid chain; its full sequence is Elongation factor Ts (293 aa).

An involved in Mg(2+) ion dislocation from EF-Tu region spans residues Thr80–Val83.

It belongs to the EF-Ts family.

It is found in the cytoplasm. Functionally, associates with the EF-Tu.GDP complex and induces the exchange of GDP to GTP. It remains bound to the aminoacyl-tRNA.EF-Tu.GTP complex up to the GTP hydrolysis stage on the ribosome. In Paraburkholderia phytofirmans (strain DSM 17436 / LMG 22146 / PsJN) (Burkholderia phytofirmans), this protein is Elongation factor Ts.